The primary structure comprises 238 residues: ATP synthase subunit a (238 aa).

A run of 5 helical transmembrane segments spans residues 18–38 (LTLLAVCIVTIAVIFAFVFWA), 76–96 (YSLLLFTIFLFVAVANNLGLF), 114–134 (NLAFDLALSLFITLMVHIEGV), 166–186 (SLAIRLFGNIFAGEVVTGLIV), and 193–213 (VYWWPIAFLVNMAWTAFSVFI).

This sequence belongs to the ATPase A chain family. F-type ATPases have 2 components, CF(1) - the catalytic core - and CF(0) - the membrane proton channel. CF(1) has five subunits: alpha(3), beta(3), gamma(1), delta(1), epsilon(1). CF(0) has three main subunits: a(1), b(2) and c(9-12). The alpha and beta chains form an alternating ring which encloses part of the gamma chain. CF(1) is attached to CF(0) by a central stalk formed by the gamma and epsilon chains, while a peripheral stalk is formed by the delta and b chains.

It is found in the cell membrane. Key component of the proton channel; it plays a direct role in the translocation of protons across the membrane. The polypeptide is ATP synthase subunit a (Streptococcus pyogenes serotype M49 (strain NZ131)).